The sequence spans 636 residues: 1-deoxy-D-xylulose-5-phosphate synthase (636 aa).

Thiamine diphosphate is bound by residues histidine 72 and 113 to 115 (GHA). Position 144 (aspartate 144) interacts with Mg(2+). Residues 145 to 146 (GA), asparagine 174, tyrosine 287, and glutamate 370 each bind thiamine diphosphate. Asparagine 174 is a binding site for Mg(2+).

The protein belongs to the transketolase family. DXPS subfamily. As to quaternary structure, homodimer. Requires Mg(2+) as cofactor. Thiamine diphosphate serves as cofactor.

It catalyses the reaction D-glyceraldehyde 3-phosphate + pyruvate + H(+) = 1-deoxy-D-xylulose 5-phosphate + CO2. The protein operates within metabolic intermediate biosynthesis; 1-deoxy-D-xylulose 5-phosphate biosynthesis; 1-deoxy-D-xylulose 5-phosphate from D-glyceraldehyde 3-phosphate and pyruvate: step 1/1. Its function is as follows. Catalyzes the acyloin condensation reaction between C atoms 2 and 3 of pyruvate and glyceraldehyde 3-phosphate to yield 1-deoxy-D-xylulose-5-phosphate (DXP). The protein is 1-deoxy-D-xylulose-5-phosphate synthase of Crocosphaera subtropica (strain ATCC 51142 / BH68) (Cyanothece sp. (strain ATCC 51142)).